The sequence spans 248 residues: ATP synthase subunit a, chloroplastic (248 aa).

Helical transmembrane passes span Gly-35–Gly-55, Val-94–Ile-114, Ile-133–Ser-153, Val-202–Ala-222, and Ser-224–Gly-244.

The protein belongs to the ATPase A chain family. F-type ATPases have 2 components, CF(1) - the catalytic core - and CF(0) - the membrane proton channel. CF(1) has five subunits: alpha(3), beta(3), gamma(1), delta(1), epsilon(1). CF(0) has four main subunits: a, b, b' and c.

The protein resides in the plastid. Its subcellular location is the chloroplast thylakoid membrane. Its function is as follows. Key component of the proton channel; it plays a direct role in the translocation of protons across the membrane. This is ATP synthase subunit a, chloroplastic from Porphyra purpurea (Red seaweed).